The primary structure comprises 217 residues: Octanoyltransferase (217 aa).

The region spanning 33–208 (SSSQDEIWLV…KLCSLLGIAS (176 aa)) is the BPL/LPL catalytic domain. Residues 72–79 (RGGQVTYH), 139–141 (SIG), and 152–154 (GLA) each bind substrate. The active-site Acyl-thioester intermediate is the cysteine 170.

The protein belongs to the LipB family.

Its subcellular location is the cytoplasm. It carries out the reaction octanoyl-[ACP] + L-lysyl-[protein] = N(6)-octanoyl-L-lysyl-[protein] + holo-[ACP] + H(+). It functions in the pathway protein modification; protein lipoylation via endogenous pathway; protein N(6)-(lipoyl)lysine from octanoyl-[acyl-carrier-protein]: step 1/2. Functionally, catalyzes the transfer of endogenously produced octanoic acid from octanoyl-acyl-carrier-protein onto the lipoyl domains of lipoate-dependent enzymes. Lipoyl-ACP can also act as a substrate although octanoyl-ACP is likely to be the physiological substrate. In Pseudoalteromonas atlantica (strain T6c / ATCC BAA-1087), this protein is Octanoyltransferase.